Reading from the N-terminus, the 225-residue chain is Global nitrogen regulator (225 aa).

R9–R131 contacts a nucleoside 3',5'-cyclic phosphate. An HTH crp-type domain is found at R145–V218. The segment at residues S177–L196 is a DNA-binding region (H-T-H motif).

In terms of biological role, required for full expression of proteins subject to ammonium repression. Transcriptional activator of genes subject to nitrogen control. In Synechocystis sp. (strain ATCC 27184 / PCC 6803 / Kazusa), this protein is Global nitrogen regulator (ntcA).